Consider the following 711-residue polypeptide: MKGFWNSKSTIRITLSFIFLFISQFSDVLAAPTRHLCRPEQKDALLKFKTEFEIGKPCRYCTVYCIEPHPKTESWGNNNSDCCNWEGVTCNAKSGEVIELDLSCSYLHGRFHSNSSIRNLHFLTTLDLSFNDFKGQIMSSIENLSHLTYLDLSFNHFSGQVPSSIGNLSHLTFLDLYCNQFSGQVPSSIGNLSHLTTLELSFNRFFGQFPSSIGGLSHLTTLNLFVNNFLGQIPSSIGNLSNLTSLYLCKNNFSGQIPSFIGNLSQLTRLDLSSNNFFGEIPGWLWTLPNLFYVNLSYNTFIGFQRPNKPEPSMGHLLGSNNNFTGKIPSFICELRSLETLDLSDNNFSGLIPRCMGNLKSNLSHLNLRQNNLSGGLPKHIFEILRSLDVGHNQLVGKLPRSLRFFSTLEVLNVESNRINDTFPFWLTSLPKLQVLVLRSNAFHGPIHEASFLKLRIIDISHNHFNGTLPSDYFVKWSAMSSLGTDEDRSNANYMGSVYYQDSMVLMNKGVESELIRILTIYTALDFSGNKFEGEIPKSIGLLKELLVLNLSNNAFTGHIPSSMGKLTALESLDVSQNKLYGEIPQEIGNLSFLSCMNFSHNQLAGLVPGGQQFLTQPCSSFEDNLGLFGSTLEEDCRDIHTPASHQQYKTPETEEEDEEVISWIAAAIGFIPGIVLGLTIGYILVFYKPEWFIKTFGRNNCRRRSTTTTH.

Residues 1-30 (MKGFWNSKSTIRITLSFIFLFISQFSDVLA) form the signal peptide. The Extracellular segment spans residues 31 to 666 (APTRHLCRPE…EDEEVISWIA (636 aa)). Residues Asn78, Asn114, Asn143, Asn167, and Asn191 are each glycosylated (N-linked (GlcNAc...) asparagine). LRR repeat units follow at residues 120–143 (LHFLTTLDLSFNDFKGQIMSSIEN), 144–168 (LSHLTYLDLSFNHFSGQVPSSIGNL), 170–192 (HLTFLDLYCNQFSGQVPSSIGNL), 193–216 (SHLTTLELSFNRFFGQFPSSIGGL), 218–240 (HLTTLNLFVNNFLGQIPSSIGNL), 241–266 (SNLTSLYLCKNNFSGQIPSFIGNLSQ), 268–288 (TRLDLSSNNFFGEIPGWLWTL), and 289–316 (PNLFYVNLSYNTFIGFQRPNKPEPSMGH). Asn239, Asn242, Asn252, and Asn263 each carry an N-linked (GlcNAc...) asparagine glycan. 5 N-linked (GlcNAc...) asparagine glycosylation sites follow: Asn295, Asn323, Asn347, Asn362, and Asn372. Residues 317–334 (LLGSNNNFTGKIPSFICE) form an LRR 9; degenerate repeat. 10 LRR repeats span residues 335-358 (LRSLETLDLSDNNFSGLIPRCMGN), 360-384 (KSNLSHLNLRQNNLSGGLPKHIFEI), 386-406 (RSLDVGHNQLVGKLPRSLRFF), 407-430 (STLEVLNVESNRINDTFPFWLTSL), 431-452 (PKLQVLVLRSNAFHGPIHEASF), 453-476 (LKLRIIDISHNHFNGTLPSDYFVK), 519-543 (LTIYTALDFSGNKFEGEIPKSIGLL), 544-567 (KELLVLNLSNNAFTGHIPSSMGKL), 568-591 (TALESLDVSQNKLYGEIPQEIGNL), and 593-616 (FLSCMNFSHNQLAGLVPGGQQFLT). Asn420 carries an N-linked (GlcNAc...) asparagine glycan. N-linked (GlcNAc...) asparagine glycosylation occurs at Asn466. Residues Asn550, Asn590, and Asn598 are each glycosylated (N-linked (GlcNAc...) asparagine). The chain crosses the membrane as a helical span at residues 667–687 (AAIGFIPGIVLGLTIGYILVF). The Cytoplasmic segment spans residues 688–711 (YKPEWFIKTFGRNNCRRRSTTTTH).

This sequence belongs to the RLP family.

It localises to the cell membrane. The protein is Receptor-like protein 43 of Arabidopsis thaliana (Mouse-ear cress).